Here is a 345-residue protein sequence, read N- to C-terminus: DNA-directed RNA polymerases I and III subunit rpac1 (345 aa).

A compositionally biased stretch (polar residues) spans M1–S11. Residues M1–T20 form a disordered region.

It belongs to the archaeal Rpo3/eukaryotic RPB3 RNA polymerase subunit family. Component of the RNA polymerase I (Pol I) and RNA polymerase III (Pol III) complexes consisting of at least 13 and 17 subunits, respectively. Interacts with RPAC19/RPAC2.

It is found in the nucleus. Functionally, DNA-dependent RNA polymerase catalyzes the transcription of DNA into RNA using the four ribonucleoside triphosphates as substrates. Common component of RNA polymerases I and III which synthesize ribosomal RNA precursors and small RNAs, such as 5S rRNA and tRNAs, respectively. RPAC1 is part of the Pol core element with the central large cleft and probably a clamp element that moves to open and close the cleft. The chain is DNA-directed RNA polymerases I and III subunit rpac1 (polr1c) from Dictyostelium discoideum (Social amoeba).